The primary structure comprises 1770 residues: Transposon Ty2-C Gag-Pol polyprotein (1770 aa).

3 stretches are compositionally biased toward polar residues: residues 1–11, 19–39, and 49–60; these read MESQQLHQNPR, ASVTSKEVPSNQDPLAVSASN, and KVNSQQETTPGT. Disordered stretches follow at residues 1-88 and 355-453; these read MESQ…YQQH and SQYK…LPDH. The interval 295-397 is RNA-binding; the sequence is ENNINVSDRL…SSKPRAAKAH (103 aa). Over residues 369–382 the composition is skewed to low complexity; it reads TSPNTTNTKVTTRN. Polar residues-rich tracts occupy residues 399–408 and 415–435; these read IATSSKFSRV and ESTVSSQYLSDDNELSLGQQQ. Aspartate 457 serves as the catalytic For protease activity; shared with dimeric partner. The segment at 579 to 636 is integrase-type zinc finger-like; sequence NVNKSKSVNKYPYPLIHRMLGHANFRSIQKSLKKNAVTYLKESDIEWSNASTYQCPDC. The region spanning 656-831 is the Integrase catalytic domain; that stretch reads ESYEPFQYLH…AGLDITTILP (176 aa). 2 residues coordinate Mg(2+): aspartate 667 and aspartate 732. Disordered regions lie at residues 1003–1038 and 1057–1205; these read EMGGTVESDTTSPRHSSTFTARNQKRPGSPNDMIDL and GGTE…TEIE. Polar residues-rich tracts occupy residues 1009–1024 and 1065–1082; these read ESDTTSPRHSSTFTAR and QRNSDTNIKYRTTNSTPS. A Bipartite nuclear localization signal motif is present at residues 1193–1227; sequence KKRSLEDNETEIEVSRDTWNNKNMRSLEPPRSKKR. The region spanning 1353 to 1491 is the Reverse transcriptase Ty1/copia-type domain; the sequence is NDYYITQLDI…DILGLEIKYQ (139 aa). 6 residues coordinate Mg(2+): aspartate 1361, aspartate 1442, aspartate 1443, aspartate 1625, glutamate 1667, and aspartate 1700. The RNase H Ty1/copia-type domain occupies 1625-1767; that stretch reads DASYGNQPYY…IKTFKLLTNK (143 aa).

The capsid protein forms a homotrimer, from which the VLPs are assembled. The protease is a homodimer, whose active site consists of two apposed aspartic acid residues. Initially, virus-like particles (VLPs) are composed of the structural unprocessed proteins Gag and Gag-Pol, and also contain the host initiator methionine tRNA (tRNA(i)-Met) which serves as a primer for minus-strand DNA synthesis, and a dimer of genomic Ty RNA. Processing of the polyproteins occurs within the particle and proceeds by an ordered pathway, called maturation. First, the protease (PR) is released by autocatalytic cleavage of the Gag-Pol polyprotein, and this cleavage is a prerequisite for subsequent processing at the remaining sites to release the mature structural and catalytic proteins. Maturation takes place prior to the RT reaction and is required to produce transposition-competent VLPs.

It localises to the cytoplasm. The protein resides in the nucleus. The enzyme catalyses DNA(n) + a 2'-deoxyribonucleoside 5'-triphosphate = DNA(n+1) + diphosphate. The catalysed reaction is Endonucleolytic cleavage to 5'-phosphomonoester.. Functionally, capsid protein (CA) is the structural component of the virus-like particle (VLP), forming the shell that encapsulates the retrotransposons dimeric RNA genome. The particles are assembled from trimer-clustered units and there are holes in the capsid shells that allow for the diffusion of macromolecules. CA also has nucleocapsid-like chaperone activity, promoting primer tRNA(i)-Met annealing to the multipartite primer-binding site (PBS), dimerization of Ty2 RNA and initiation of reverse transcription. In terms of biological role, the aspartyl protease (PR) mediates the proteolytic cleavages of the Gag and Gag-Pol polyproteins after assembly of the VLP. Reverse transcriptase/ribonuclease H (RT) is a multifunctional enzyme that catalyzes the conversion of the retro-elements RNA genome into dsDNA within the VLP. The enzyme displays a DNA polymerase activity that can copy either DNA or RNA templates, and a ribonuclease H (RNase H) activity that cleaves the RNA strand of RNA-DNA heteroduplexes during plus-strand synthesis and hydrolyzes RNA primers. The conversion leads to a linear dsDNA copy of the retrotransposon that includes long terminal repeats (LTRs) at both ends. Its function is as follows. Integrase (IN) targets the VLP to the nucleus, where a subparticle preintegration complex (PIC) containing at least integrase and the newly synthesized dsDNA copy of the retrotransposon must transit the nuclear membrane. Once in the nucleus, integrase performs the integration of the dsDNA into the host genome. The sequence is that of Transposon Ty2-C Gag-Pol polyprotein (TY2B-C) from Saccharomyces cerevisiae (strain ATCC 204508 / S288c) (Baker's yeast).